The following is a 310-amino-acid chain: Cytochrome f (310 aa).

The first 27 residues, 1–27 (MRRLLSPLFAALIVGVTVLTAPSTSWA), serve as a signal peptide directing secretion. Residues tyrosine 28, cysteine 48, cysteine 51, and histidine 52 each contribute to the heme site. A helical membrane pass occupies residues 277–297 (IYGLLAFFAAVALAQIMLVLK).

This sequence belongs to the cytochrome f family. In terms of assembly, the 4 large subunits of the cytochrome b6-f complex are cytochrome b6, subunit IV (17 kDa polypeptide, PetD), cytochrome f and the Rieske protein, while the 4 small subunits are PetG, PetL, PetM and PetN. The complex functions as a dimer. Requires heme as cofactor.

Its subcellular location is the cellular thylakoid membrane. Component of the cytochrome b6-f complex, which mediates electron transfer between photosystem II (PSII) and photosystem I (PSI), cyclic electron flow around PSI, and state transitions. The protein is Cytochrome f of Synechococcus sp. (strain WH7803).